Reading from the N-terminus, the 93-residue chain is Acyl carrier protein AcpXL (93 aa).

The Carrier domain occupies 2 to 88 (SSTFDKVADI…NLCAKIDELV (87 aa)). The residue at position 37 (S37) is an O-(pantetheine 4'-phosphoryl)serine.

4'-phosphopantetheine is transferred from CoA to a specific serine of apo-ACP by AcpS. This modification is essential for activity because fatty acids are bound in thioester linkage to the sulfhydryl of the prosthetic group.

Its subcellular location is the cytoplasm. Its pathway is glycolipid biosynthesis; KDO(2)-lipid A biosynthesis. Functionally, carrier of the growing fatty acid chain in fatty acid biosynthesis. Is involved in the transfer of long hydroxylated fatty acids to lipid A. The sequence is that of Acyl carrier protein AcpXL (acpXL) from Brucella melitensis biotype 1 (strain ATCC 23456 / CCUG 17765 / NCTC 10094 / 16M).